The chain runs to 219 residues: Exosomal polycystin-1-interacting protein (219 aa).

The signal sequence occupies residues 1–19 (MAPPSRHCLLLISTLGVFA). N-linked (GlcNAc...) asparagine glycans are attached at residues Asn-29, Asn-42, Asn-95, Asn-188, and Asn-210.

Belongs to the EPCIP family. In terms of assembly, homooligomer. Interacts with PKD1 (via the PKD repeats in the N-terminal extracellular region); the interaction is not dependent on N-glycosylation of either protein. In terms of processing, N-glycosylated. As to expression, detected in the kidney and in the endothelium of large blood vessels (at protein level).

It localises to the vesicle. The protein resides in the secreted. It is found in the extracellular exosome. Functionally, likely to be involved with PKD1 in the detection, sequestration and exocytosis of senescent mitochondria. This Homo sapiens (Human) protein is Exosomal polycystin-1-interacting protein.